The following is an 89-amino-acid chain: Small ribosomal subunit protein uS15 (89 aa).

This sequence belongs to the universal ribosomal protein uS15 family. As to quaternary structure, part of the 30S ribosomal subunit. Forms a bridge to the 50S subunit in the 70S ribosome, contacting the 23S rRNA.

Its function is as follows. One of the primary rRNA binding proteins, it binds directly to 16S rRNA where it helps nucleate assembly of the platform of the 30S subunit by binding and bridging several RNA helices of the 16S rRNA. Functionally, forms an intersubunit bridge (bridge B4) with the 23S rRNA of the 50S subunit in the ribosome. The chain is Small ribosomal subunit protein uS15 from Cyanothece sp. (strain PCC 7425 / ATCC 29141).